Reading from the N-terminus, the 301-residue chain is Ribosomal large subunit pseudouridine synthase C (301 aa).

Residues 11-70 (SRLDKYLRRLYPLLTQGVIEKALRQKQIIVNSKKAEASLRVVEGDEIFIHDKFNLPIAQP) enclose the S4 RNA-binding domain. The active site involves Asp-140.

The protein belongs to the pseudouridine synthase RluA family.

It catalyses the reaction uridine(955/2504/2580) in 23S rRNA = pseudouridine(955/2504/2580) in 23S rRNA. Its function is as follows. Responsible for synthesis of pseudouridine from uracil at positions 955, 2504 and 2580 in 23S ribosomal RNA. The polypeptide is Ribosomal large subunit pseudouridine synthase C (rluC) (Rickettsia bellii (strain RML369-C)).